Consider the following 525-residue polypeptide: Alcohol O-acetyltransferase 1 (525 aa).

Residues 24–41 (GHARRMGSVEDLYVALNR) form a membrane association region. Active-site charge relay system residues include His191 and Asp195. The membrane association stretch occupies residues 508 to 525 (QESLEELCSIYKALLLGP).

It belongs to the ATF1 alcohol acetyltransferase family.

The protein resides in the lipid droplet. Its subcellular location is the endoplasmic reticulum membrane. It carries out the reaction an aliphatic alcohol + acetyl-CoA = an acetyl ester + CoA. It catalyses the reaction a fatty acyl-CoA + H2O = a fatty acid + CoA + H(+). The catalysed reaction is 3-methylbutanol + acetyl-CoA = 3-methylbutyl acetate + CoA. With respect to regulation, found to be inhibited by cadmium, copper, zinc and mercurium divalent cations and sulfhydryl reagents. Inhibited by the addition of unsaturated fatty acids to the culture. In terms of biological role, major alcohol O-acetyltransferase that uses acetyl-CoA to synthesize acetate esters from various alcohols, producing ethyl acetate, isoamyl acetate, isobutyl acetate, butyl acetate, hexyl acetate, heptyl acetate and octyl acetate. The alcohol acyltransferase activity is promiscuous with regard to alcohol but relatively specific for acetyl-CoA since ATF1 does not use any other acyl-CoAs (C3, C4, C5, C6, C8, C10, C12). Acts also as an efficient thioesterase in vitro with specificity towards medium-chain-length acyl-CoAs. In natural environments, the production of aromatic volatile metabolites promotes dispersal through insect vectors. The polypeptide is Alcohol O-acetyltransferase 1 (Saccharomyces cerevisiae (strain ATCC 204508 / S288c) (Baker's yeast)).